The primary structure comprises 338 residues: Glyceraldehyde-3-phosphate dehydrogenase GAPC2, cytosolic (338 aa).

Residues 15–16 (RI), aspartate 37, and arginine 84 contribute to the NAD(+) site. 155–157 (SCT) is a binding site for D-glyceraldehyde 3-phosphate. The active-site Nucleophile is cysteine 156. Residue cysteine 156 is modified to S-glutathionyl cysteine; transient; alternate. Cysteine 156 carries the post-translational modification S-nitrosocysteine; transient; alternate. Position 160 is an S-nitrosocysteine; transient (cysteine 160). D-glyceraldehyde 3-phosphate is bound by residues threonine 186, 215 to 216 (TG), and arginine 238. An NAD(+)-binding site is contributed by asparagine 320.

This sequence belongs to the glyceraldehyde-3-phosphate dehydrogenase family. In terms of assembly, homotetramer. Interacts with PLDDELTA. Binds to DPB3-1/NF-YC10 in response to heat-stress; this interaction promotes DPB3-1/NF-YC10 DNA-binding ability to its target promoter. In terms of processing, S-glutathionylation at Cys-156 in the presence of oxidized glutathione (GSSG). S-nitrosylation at Cys-156 and Cys-160 in the presence of S-nitrosoglutathione (GSNO) or sodium nitroprusside (SNP). These reactions may be both a protective mechanism against irreversible oxidation and a mean to store inhibited enzyme in a recoverable form.

Its subcellular location is the cytoplasm. The protein localises to the nucleus. The enzyme catalyses D-glyceraldehyde 3-phosphate + phosphate + NAD(+) = (2R)-3-phospho-glyceroyl phosphate + NADH + H(+). Its pathway is carbohydrate degradation; glycolysis; pyruvate from D-glyceraldehyde 3-phosphate: step 1/5. Its activity is regulated as follows. Inhibition by oxidized glutathione (GSSG), S-nitrosoglutathione (GSNO) and hydrogen peroxide. Key enzyme in glycolysis that catalyzes the first step of the pathway by converting D-glyceraldehyde 3-phosphate (G3P) into 3-phospho-D-glyceroyl phosphate. Essential for the maintenance of cellular ATP levels and carbohydrate metabolism. Binds DNA in vitro. Together with DNA polymerase II subunit B3-1 (DPB3-1) and GAPC1, enhances heat tolerance and promotes the expression of heat-inducible genes. The protein is Glyceraldehyde-3-phosphate dehydrogenase GAPC2, cytosolic of Arabidopsis thaliana (Mouse-ear cress).